We begin with the raw amino-acid sequence, 415 residues long: Serine hydroxymethyltransferase 1 (415 aa).

(6S)-5,6,7,8-tetrahydrofolate-binding positions include L122 and 126 to 128 (GHL). K230 is modified (N6-(pyridoxal phosphate)lysine).

It belongs to the SHMT family. As to quaternary structure, homodimer. The cofactor is pyridoxal 5'-phosphate.

The protein localises to the cytoplasm. The catalysed reaction is (6R)-5,10-methylene-5,6,7,8-tetrahydrofolate + glycine + H2O = (6S)-5,6,7,8-tetrahydrofolate + L-serine. Its pathway is one-carbon metabolism; tetrahydrofolate interconversion. It functions in the pathway amino-acid biosynthesis; glycine biosynthesis; glycine from L-serine: step 1/1. Catalyzes the reversible interconversion of serine and glycine with tetrahydrofolate (THF) serving as the one-carbon carrier. This reaction serves as the major source of one-carbon groups required for the biosynthesis of purines, thymidylate, methionine, and other important biomolecules. Also exhibits THF-independent aldolase activity toward beta-hydroxyamino acids, producing glycine and aldehydes, via a retro-aldol mechanism. The protein is Serine hydroxymethyltransferase 1 of Ralstonia nicotianae (strain ATCC BAA-1114 / GMI1000) (Ralstonia solanacearum).